The primary structure comprises 265 residues: Chlorophyll a-b binding protein 1A, chloroplastic (265 aa).

The transit peptide at 1-34 (MAAAAMALSSPSFAGQAVKLSPSASENSGNGRIT) directs the protein to the chloroplast. A helical membrane pass occupies residues 151-171 (LVHAQSILAIWACQVVLMGAV). Positions 152, 156, 164, 172, 175, and 181 each coordinate chlorophyll b. Chlorophyll a contacts are provided by K212, E213, N216, R218, Q230, H245, and A254. Residues 219–239 (LAMFSMFGFFVQAIVTGKGPL) form a helical membrane-spanning segment. Chlorophyll b is bound at residue F261.

Belongs to the light-harvesting chlorophyll a/b-binding (LHC) protein family. In terms of assembly, the LHC complex consists of chlorophyll a-b binding proteins. Binds at least 14 chlorophylls (8 Chl-a and 6 Chl-b) and carotenoids such as lutein and neoxanthin. is required as a cofactor. Photoregulated by reversible phosphorylation of its threonine residues.

It is found in the plastid. The protein resides in the chloroplast thylakoid membrane. Functionally, the light-harvesting complex (LHC) functions as a light receptor, it captures and delivers excitation energy to photosystems with which it is closely associated. The polypeptide is Chlorophyll a-b binding protein 1A, chloroplastic (CAB1A) (Solanum lycopersicum (Tomato)).